We begin with the raw amino-acid sequence, 212 residues long: Imidazole glycerol phosphate synthase subunit HisH (212 aa).

One can recognise a Glutamine amidotransferase type-1 domain in the interval Lys2–Val212. The active-site Nucleophile is the Cys82. Residues His190 and Glu192 contribute to the active site.

In terms of assembly, heterodimer of HisH and HisF.

The protein localises to the cytoplasm. The catalysed reaction is 5-[(5-phospho-1-deoxy-D-ribulos-1-ylimino)methylamino]-1-(5-phospho-beta-D-ribosyl)imidazole-4-carboxamide + L-glutamine = D-erythro-1-(imidazol-4-yl)glycerol 3-phosphate + 5-amino-1-(5-phospho-beta-D-ribosyl)imidazole-4-carboxamide + L-glutamate + H(+). The enzyme catalyses L-glutamine + H2O = L-glutamate + NH4(+). The protein operates within amino-acid biosynthesis; L-histidine biosynthesis; L-histidine from 5-phospho-alpha-D-ribose 1-diphosphate: step 5/9. Its function is as follows. IGPS catalyzes the conversion of PRFAR and glutamine to IGP, AICAR and glutamate. The HisH subunit catalyzes the hydrolysis of glutamine to glutamate and ammonia as part of the synthesis of IGP and AICAR. The resulting ammonia molecule is channeled to the active site of HisF. The protein is Imidazole glycerol phosphate synthase subunit HisH of Chromobacterium violaceum (strain ATCC 12472 / DSM 30191 / JCM 1249 / CCUG 213 / NBRC 12614 / NCIMB 9131 / NCTC 9757 / MK).